Reading from the N-terminus, the 209-residue chain is 2,3-bisphosphoglycerate-dependent phosphoglycerate mutase (209 aa).

Substrate is bound by residues 8–15 (RHGQSEGN), 21–22 (TG), R60, 87–90 (ERDY), K98, 114–115 (RR), and 158–159 (GN). H9 (tele-phosphohistidine intermediate) is an active-site residue. E87 acts as the Proton donor/acceptor in catalysis.

The protein belongs to the phosphoglycerate mutase family. BPG-dependent PGAM subfamily. Homodimer.

The enzyme catalyses (2R)-2-phosphoglycerate = (2R)-3-phosphoglycerate. The protein operates within carbohydrate degradation; glycolysis; pyruvate from D-glyceraldehyde 3-phosphate: step 3/5. Its function is as follows. Catalyzes the interconversion of 2-phosphoglycerate and 3-phosphoglycerate. The chain is 2,3-bisphosphoglycerate-dependent phosphoglycerate mutase from Rhizobium etli (strain ATCC 51251 / DSM 11541 / JCM 21823 / NBRC 15573 / CFN 42).